The primary structure comprises 92 residues: Small ribosomal subunit protein uS15c (92 aa).

Belongs to the universal ribosomal protein uS15 family. As to quaternary structure, part of the 30S ribosomal subunit.

The protein localises to the plastid. Its subcellular location is the chloroplast. This is Small ribosomal subunit protein uS15c (rps15-A) from Lemna minor (Common duckweed).